We begin with the raw amino-acid sequence, 687 residues long: Glycine--tRNA ligase beta subunit (687 aa).

It belongs to the class-II aminoacyl-tRNA synthetase family. As to quaternary structure, tetramer of two alpha and two beta subunits.

Its subcellular location is the cytoplasm. It catalyses the reaction tRNA(Gly) + glycine + ATP = glycyl-tRNA(Gly) + AMP + diphosphate. The polypeptide is Glycine--tRNA ligase beta subunit (Neisseria gonorrhoeae (strain NCCP11945)).